The chain runs to 333 residues: Cinnamoyl-CoA reductase 1 (333 aa).

NADP(+)-binding positions include 13 to 19, Arg38, Lys44, 64 to 65, 84 to 86, Tyr157, Lys161, 184 to 187, and Ser199; these read GAGGFIA, DL, TAS, and PVLV. Residues Cys150 and Cys158 are joined by a disulfide bond. Lys161 functions as the Proton donor in the catalytic mechanism.

This sequence belongs to the NAD(P)-dependent epimerase/dehydratase family. Dihydroflavonol-4-reductase subfamily. Post-translationally, the formation of a reversible disulfide bond reduces activity by perturbing the positioning of nearby catalytic residues. In terms of tissue distribution, expressed in flowers, leaves and stems.

Its subcellular location is the cytoplasm. The enzyme catalyses (E)-coniferaldehyde + NADP(+) + CoA = (E)-feruloyl-CoA + NADPH + H(+). It carries out the reaction (E)-4-coumaraldehyde + NADP(+) + CoA = (E)-4-coumaroyl-CoA + NADPH + H(+). It catalyses the reaction (E)-sinapaldehyde + NADP(+) + CoA = (E)-sinapoyl-CoA + NADPH + H(+). The catalysed reaction is (E)-cinnamaldehyde + NADP(+) + CoA = (E)-cinnamoyl-CoA + NADPH + H(+). Its pathway is aromatic compound metabolism; phenylpropanoid biosynthesis. With respect to regulation, inhibited by sodium iodide-mediated oxidation. In terms of biological role, involved in the latter stages of lignin biosynthesis. Catalyzes one of the last steps of monolignol biosynthesis, the conversion of cinnamoyl-CoAs into their corresponding cinnamaldehydes. Mediates the conversion of feruloyl CoA to coniferylaldehyde. Also active toward p-coumaroyl-CoA and sinapoyl-CoA. Involved in the production of floral volatile phenylpropanoids in flowers of fragrant cultivars (e.g. cv. Mitchell and cv. V26) from cinnamic acid, a common precursor with the anthocyanin biosynthesis pathway involved in flower pigmentation. The protein is Cinnamoyl-CoA reductase 1 of Petunia hybrida (Petunia).